Reading from the N-terminus, the 26-residue chain is GIWGTALKWGVKLLPKLVGMAQTKKQ.

Expressed by the venom gland.

The protein localises to the secreted. The protein resides in the target cell membrane. Has a broad spectrum of activity against both Gram-positive and Gram-negative bacteria and S.cerevisiae. Has insecticidal and hemolytic activities. May act by disrupting the integrity of the bacterial cell membrane. The sequence is that of M-poneritoxin-Ng1d from Neoponera goeldii (Ponerine ant).